The chain runs to 980 residues: Protein translocase subunit SecA (980 aa).

ATP is bound by residues Gln109, 127 to 131 (GEGKT), and Asp529. The disordered stretch occupies residues 954 to 980 (QKIGRNDPCPCGSGKKYKHCHGKDNPQ). The Zn(2+) site is built by Cys962, Cys964, Cys973, and His974.

The protein belongs to the SecA family. In terms of assembly, monomer and homodimer. Part of the essential Sec protein translocation apparatus which comprises SecA, SecYEG and auxiliary proteins SecDF. Other proteins may also be involved. It depends on Zn(2+) as a cofactor.

The protein resides in the cell inner membrane. It localises to the cytoplasm. The enzyme catalyses ATP + H2O + cellular proteinSide 1 = ADP + phosphate + cellular proteinSide 2.. Its function is as follows. Part of the Sec protein translocase complex. Interacts with the SecYEG preprotein conducting channel. Has a central role in coupling the hydrolysis of ATP to the transfer of proteins into and across the cell membrane, serving as an ATP-driven molecular motor driving the stepwise translocation of polypeptide chains across the membrane. The polypeptide is Protein translocase subunit SecA (Brachyspira hyodysenteriae (strain ATCC 49526 / WA1)).